The sequence spans 120 residues: Autophagy-related protein 8d (120 aa).

Gly117 carries Phosphatidylethanolamine amidated glycine lipidation. The propeptide at 118-120 is removed in mature form; it reads IFF.

It belongs to the ATG8 family. In terms of assembly, interacts with ATG4B. Interacts with NBR1. Post-translationally, the C-terminal 3 residues are removed by ATG4 to expose Gly-117 at the C-terminus. This Gly-117 forms then a thioester bond with the 'Cys-558' of ATG7 (E1-like activating enzyme) before being transferred to the 'Cys-258' of ATG3 (the specific E2 conjugating enzyme), in order to be finally amidated with phosphatidylethanolamine. This lipid modification anchors ATG8 to autophagosomes. As to expression, constitutively expressed.

It localises to the cytoplasmic vesicle. It is found in the autophagosome membrane. The protein resides in the vacuole membrane. Its subcellular location is the cytoplasm. The protein localises to the cytoskeleton. Its function is as follows. Ubiquitin-like modifier involved in autophagosomes formation. May mediate the delivery of the autophagosomes to the vacuole via the microtubule cytoskeleton. This chain is Autophagy-related protein 8d (ATG8D), found in Arabidopsis thaliana (Mouse-ear cress).